The sequence spans 378 residues: Carbamoyl phosphate synthase small chain (378 aa).

The interval 1-189 (MTKPAILALA…DSHPTIDAAD (189 aa)) is CPSase. L-glutamine-binding residues include Ser47, Gly241, and Gly243. The Glutamine amidotransferase type-1 domain maps to 193–378 (HVVAFDYGVK…RFTDAMAKRR (186 aa)). Residue Cys269 is the Nucleophile of the active site. Residues Leu270, Gln273, Asn311, Gly313, and Phe314 each coordinate L-glutamine. Residues His353 and Glu355 contribute to the active site.

Belongs to the CarA family. In terms of assembly, composed of two chains; the small (or glutamine) chain promotes the hydrolysis of glutamine to ammonia, which is used by the large (or ammonia) chain to synthesize carbamoyl phosphate. Tetramer of heterodimers (alpha,beta)4.

The enzyme catalyses hydrogencarbonate + L-glutamine + 2 ATP + H2O = carbamoyl phosphate + L-glutamate + 2 ADP + phosphate + 2 H(+). The catalysed reaction is L-glutamine + H2O = L-glutamate + NH4(+). The protein operates within amino-acid biosynthesis; L-arginine biosynthesis; carbamoyl phosphate from bicarbonate: step 1/1. It functions in the pathway pyrimidine metabolism; UMP biosynthesis via de novo pathway; (S)-dihydroorotate from bicarbonate: step 1/3. Small subunit of the glutamine-dependent carbamoyl phosphate synthetase (CPSase). CPSase catalyzes the formation of carbamoyl phosphate from the ammonia moiety of glutamine, carbonate, and phosphate donated by ATP, constituting the first step of 2 biosynthetic pathways, one leading to arginine and/or urea and the other to pyrimidine nucleotides. The small subunit (glutamine amidotransferase) binds and cleaves glutamine to supply the large subunit with the substrate ammonia. The sequence is that of Carbamoyl phosphate synthase small chain from Pseudomonas putida (strain ATCC 47054 / DSM 6125 / CFBP 8728 / NCIMB 11950 / KT2440).